We begin with the raw amino-acid sequence, 315 residues long: Indoleacetate decarboxylase activating enzyme (315 aa).

Residues 21 to 311 enclose the Radical SAM core domain; it reads HDGPGIRTNV…ADIIEAHGVK (291 aa). Positions 35, 39, 42, 61, 64, 67, 71, 98, 101, 106, and 110 each coordinate [4Fe-4S] cluster. 2 consecutive 4Fe-4S ferredoxin-type domains span residues 52–81 and 89–120; these read PQLL…AITD and GYVH…IAGE. Residues Gly149, 198 to 200, and His271 each bind S-adenosyl-L-methionine; that span reads DCK.

This sequence belongs to the organic radical-activating enzymes family. Requires [4Fe-4S] cluster as cofactor.

The enzyme catalyses glycyl-[protein] + reduced [flavodoxin] + S-adenosyl-L-methionine = glycin-2-yl radical-[protein] + semiquinone [flavodoxin] + 5'-deoxyadenosine + L-methionine + H(+). In terms of biological role, catalyzes activation of the indoleacetate decarboxylase OsIAD under anaerobic conditions by generation of an organic free radical on a glycine residue, via a homolytic cleavage of S-adenosyl-L-methionine (SAM). This is Indoleacetate decarboxylase activating enzyme from Tractidigestivibacter scatoligenes (Olsenella scatoligenes).